Here is a 316-residue protein sequence, read N- to C-terminus: Melanocyte-stimulating hormone receptor (316 aa).

The Extracellular segment spans residues 1–37 (MAVQGSQRRLLGSLNSTPTAIPQLGLAANQTGARCLE). Residue asparagine 29 is glycosylated (N-linked (GlcNAc...) asparagine). A helical transmembrane segment spans residues 38–63 (VSIPDGLFLSLGLVSLVENVLVVATI). Residues 64–72 (AKNRNLHSP) are Cytoplasmic-facing. A helical transmembrane segment spans residues 73 to 93 (MYCFICCLALSDLLVSGSNVV). Over 94–117 (DTLLLLLEAGALAARAAVLQQLDN) the chain is Extracellular. Residues 118 to 139 (VIDVITCSSMLSSLCFLGAIAV) form a helical membrane-spanning segment. Residues 140-162 (DRYISIFYALRYRSIVTLPRARR) are Cytoplasmic-facing. The chain crosses the membrane as a helical span at residues 163–182 (AVAAIWVASVLFSTLFIAYY). Topologically, residues 183–190 (DHTAVLLC) are extracellular. The helical transmembrane segment at 191 to 210 (LVVFFLAMLVLMAVLYVHML) threads the bilayer. Residues 211–239 (ARACQHAQGIARLHKRQRPVHKGFGLKGP) lie on the Cytoplasmic side of the membrane. A helical membrane pass occupies residues 240–265 (VTLTILLGIFFLCWGPFFLHLTLIVL). Residues 266–278 (CPEHPTCGCIFKN) lie on the Extracellular side of the membrane. A helical transmembrane segment spans residues 279 to 299 (FNLFLALIICNAIIDPLIYAF). Residues 300 to 316 (HSQELRRTLKEVLTCSW) are Cytoplasmic-facing. Residue cysteine 314 is the site of S-palmitoyl cysteine attachment.

This sequence belongs to the G-protein coupled receptor 1 family. Interacts with MGRN1, but does not undergo MGRN1-mediated ubiquitination; this interaction competes with GNAS-binding and thus inhibits agonist-induced cAMP production. Interacts with OPN3; the interaction results in a decrease in MC1R-mediated cAMP signaling and ultimately a decrease in melanin production in melanocytes.

It is found in the cell membrane. In terms of biological role, receptor for MSH (alpha, beta and gamma) and ACTH. The activity of this receptor is mediated by G proteins which activate adenylate cyclase. Mediates melanogenesis, the production of eumelanin (black/brown) and phaeomelanin (red/yellow), via regulation of cAMP signaling in melanocytes. This Gorilla gorilla gorilla (Western lowland gorilla) protein is Melanocyte-stimulating hormone receptor (MC1R).